Here is a 172-residue protein sequence, read N- to C-terminus: Shikimate kinase (172 aa).

11-16 serves as a coordination point for ATP; sequence GAGKST. S15 contacts Mg(2+). 3 residues coordinate substrate: D33, R57, and G79. Residue R117 coordinates ATP. R136 is a substrate binding site. Residue R153 participates in ATP binding.

The protein belongs to the shikimate kinase family. Monomer. Requires Mg(2+) as cofactor.

It is found in the cytoplasm. It carries out the reaction shikimate + ATP = 3-phosphoshikimate + ADP + H(+). Its pathway is metabolic intermediate biosynthesis; chorismate biosynthesis; chorismate from D-erythrose 4-phosphate and phosphoenolpyruvate: step 5/7. Functionally, catalyzes the specific phosphorylation of the 3-hydroxyl group of shikimic acid using ATP as a cosubstrate. The protein is Shikimate kinase of Pseudomonas syringae pv. syringae (strain B728a).